A 227-amino-acid chain; its full sequence is Phosphoglycolate phosphatase (227 aa).

Residue Asp-14 is the Nucleophile of the active site. Asp-14, Asp-16, and Asp-177 together coordinate Mg(2+).

Belongs to the HAD-like hydrolase superfamily. CbbY/CbbZ/Gph/YieH family. It depends on Mg(2+) as a cofactor.

The enzyme catalyses 2-phosphoglycolate + H2O = glycolate + phosphate. It participates in organic acid metabolism; glycolate biosynthesis; glycolate from 2-phosphoglycolate: step 1/1. In terms of biological role, specifically catalyzes the dephosphorylation of 2-phosphoglycolate. Is involved in the dissimilation of the intracellular 2-phosphoglycolate formed during the DNA repair of 3'-phosphoglycolate ends, a major class of DNA lesions induced by oxidative stress. The protein is Phosphoglycolate phosphatase of Thiobacillus denitrificans (strain ATCC 25259 / T1).